We begin with the raw amino-acid sequence, 305 residues long: Methionyl-tRNA formyltransferase (305 aa).

111-114 provides a ligand contact to (6S)-5,6,7,8-tetrahydrofolate; the sequence is SLLP.

The protein belongs to the Fmt family.

The catalysed reaction is L-methionyl-tRNA(fMet) + (6R)-10-formyltetrahydrofolate = N-formyl-L-methionyl-tRNA(fMet) + (6S)-5,6,7,8-tetrahydrofolate + H(+). In terms of biological role, attaches a formyl group to the free amino group of methionyl-tRNA(fMet). The formyl group appears to play a dual role in the initiator identity of N-formylmethionyl-tRNA by promoting its recognition by IF2 and preventing the misappropriation of this tRNA by the elongation apparatus. The polypeptide is Methionyl-tRNA formyltransferase (Helicobacter pylori (strain J99 / ATCC 700824) (Campylobacter pylori J99)).